The primary structure comprises 466 residues: L-seryl-tRNA(Sec) selenium transferase (466 aa).

Residue Lys294 is modified to N6-(pyridoxal phosphate)lysine.

It belongs to the SelA family. Pyridoxal 5'-phosphate serves as cofactor.

It localises to the cytoplasm. The enzyme catalyses L-seryl-tRNA(Sec) + selenophosphate + H(+) = L-selenocysteinyl-tRNA(Sec) + phosphate. It functions in the pathway aminoacyl-tRNA biosynthesis; selenocysteinyl-tRNA(Sec) biosynthesis; selenocysteinyl-tRNA(Sec) from L-seryl-tRNA(Sec) (bacterial route): step 1/1. Functionally, converts seryl-tRNA(Sec) to selenocysteinyl-tRNA(Sec) required for selenoprotein biosynthesis. This is L-seryl-tRNA(Sec) selenium transferase from Carboxydothermus hydrogenoformans (strain ATCC BAA-161 / DSM 6008 / Z-2901).